The sequence spans 597 residues: Membrane protein insertase YidC (597 aa).

The helical transmembrane segment at 8 to 28 (YFVAIALSVLILIAWQFFYVS) threads the bilayer. A disordered region spans residues 38–75 (AEKAQQAQSQPGTQQAAPGQAAPGQALPGGAIPSAAES). A compositionally biased stretch (low complexity) spans 41-70 (AQQAQSQPGTQQAAPGQAAPGQALPGGAIP). 4 helical membrane-spanning segments follow: residues 372–392 (LFGN…LIFF), 446–466 (WPIL…YVTI), 491–511 (LFGL…WPIV), and 535–555 (FTWM…GLVI).

Belongs to the OXA1/ALB3/YidC family. Type 1 subfamily. In terms of assembly, interacts with the Sec translocase complex via SecD. Specifically interacts with transmembrane segments of nascent integral membrane proteins during membrane integration.

It localises to the cell inner membrane. Its function is as follows. Required for the insertion and/or proper folding and/or complex formation of integral membrane proteins into the membrane. Involved in integration of membrane proteins that insert both dependently and independently of the Sec translocase complex, as well as at least some lipoproteins. Aids folding of multispanning membrane proteins. The chain is Membrane protein insertase YidC from Sinorhizobium medicae (strain WSM419) (Ensifer medicae).